Reading from the N-terminus, the 257-residue chain is ECF RNA polymerase sigma factor SigE (257 aa).

The tract at residues 87 to 153 (MPSWDELVRQ…RITTNLFLDM (67 aa)) is sigma-70 factor domain-2. The short motif at 111–114 (NQHD) is the Polymerase core binding element. A sigma-70 factor domain-4 region spans residues 186–236 (SRLGADLQAALDSLPPEFRAAVVLCDIEGLSYEEIGATLGVKLGTVRSRIH). Positions 211 to 230 (DIEGLSYEEIGATLGVKLGT) form a DNA-binding region, H-T-H motif.

Belongs to the sigma-70 factor family. ECF subfamily. In terms of assembly, interacts transiently with the RNA polymerase catalytic core formed by RpoA, RpoB, RpoC and RpoZ (2 alpha, 1 beta, 1 beta' and 1 omega subunit) to form the RNA polymerase holoenzyme that can initiate transcription. Interacts (via sigma-70 factor domain 4) with RseA; interaction is abrogated by treatment of cells with H(2)O(2) or detergent.

In terms of biological role, sigma factors are initiation factors that promote the attachment of RNA polymerase to specific initiation sites and are then released. Extracytoplasmic function (ECF) sigma factors are held in an inactive form by an anti-sigma factor until released. This Mycolicibacterium smegmatis (strain ATCC 700084 / mc(2)155) (Mycobacterium smegmatis) protein is ECF RNA polymerase sigma factor SigE (sigE).